Here is a 103-residue protein sequence, read N- to C-terminus: CLAVATA3/ESR (CLE)-related protein 16 (103 aa).

The first 21 residues, 1–21 (MEACSRKRRRRRAYTTSTTGY), serve as a signal peptide directing secretion. The tract at residues 71-103 (VSFTGQRREEENRDEVYKDDKRLVHTGPNPLHN) is disordered. A compositionally biased stretch (basic and acidic residues) spans 76-93 (QRREEENRDEVYKDDKRL). Proline 98 carries the hydroxyproline modification. A glycan (O-linked (Ara...) hydroxyproline) is linked at proline 98.

This sequence belongs to the CLV3/ESR signal peptide family. Post-translationally, the O-glycosylation (arabinosylation) of the hydroxyproline Pro-98 enhances binding affinity of the CLE16p peptide for its receptor. In terms of tissue distribution, expressed in roots, stems, apex, seedlings, leaves, flowers and siliques.

It localises to the secreted. The protein resides in the extracellular space. Its function is as follows. Extracellular signal peptide that regulates cell fate. Represses root apical meristem maintenance. Regulates the transition of protophloem cells from proliferation to differentiation, thus impinging on postembryonic growth capacity of the root meristem; this signaling pathway requires CRN and CLV2. The polypeptide is CLAVATA3/ESR (CLE)-related protein 16 (Arabidopsis thaliana (Mouse-ear cress)).